The sequence spans 123 residues: Large ribosomal subunit protein bL17 (123 aa).

The protein belongs to the bacterial ribosomal protein bL17 family. As to quaternary structure, part of the 50S ribosomal subunit. Contacts protein L32.

This chain is Large ribosomal subunit protein bL17, found in Borrelia garinii subsp. bavariensis (strain ATCC BAA-2496 / DSM 23469 / PBi) (Borreliella bavariensis).